The sequence spans 353 residues: Melatonin receptor type 1A (353 aa).

The interval 1–26 is disordered; it reads MRANGSELNGTVLPRDPPAEGSPRRP. At 1 to 32 the chain is on the extracellular side; the sequence is MRANGSELNGTVLPRDPPAEGSPRRPPWVTST. N-linked (GlcNAc...) asparagine glycans are attached at residues N4 and N9. A helical membrane pass occupies residues 33-53; sequence LATILIFTIVVDLLGNLLVIL. Residues 54 to 66 lie on the Cytoplasmic side of the membrane; that stretch reads SVYRNKKLRNAGN. A helical transmembrane segment spans residues 67–87; sequence IFVVSLAIADLVVAIYPYPLV. Topologically, residues 88–105 are extracellular; the sequence is LTSVFHNGWNLGYLHCQI. The cysteines at positions 103 and 180 are disulfide-linked. A helical transmembrane segment spans residues 106-126; sequence SGFLMGLSVIGSIFNITGIAI. At 127 to 145 the chain is on the cytoplasmic side; the sequence is NRYCYICHSLKYDKLYSDK. The helical transmembrane segment at 146–166 threads the bilayer; that stretch reads NSLCYVGLIWVLTVVAIVPNL. Residues 167-190 lie on the Extracellular side of the membrane; it reads FVGSLQYDPRIYSCTFAQSVSSAY. Residues 191 to 211 traverse the membrane as a helical segment; it reads TIAVVFFHFILPIAIVTYCYL. Residues 212–243 are Cytoplasmic-facing; that stretch reads RIWILVIQVRRRVKPDNNPRLKPHDFRNFVTM. Residues 244-264 traverse the membrane as a helical segment; it reads FVVFVLFAVCWAPLNFIGLAV. Topologically, residues 265 to 277 are extracellular; the sequence is AVDPETIIPRIPE. A helical transmembrane segment spans residues 278 to 298; that stretch reads WLFVSSYYMAYFNSCLNAIIY. Residues 299–353 lie on the Cytoplasmic side of the membrane; it reads GLLNQNFRREYKKIVVSFCTAKAFFQDSSNDAADRIRSKPSPLITNNNQVKVDSV.

It belongs to the G-protein coupled receptor 1 family. Expressed in optic tectum and retina, less in neostriatum, hypothalamus and thalamus.

The protein localises to the cell membrane. High affinity receptor for melatonin. The activity of this receptor is mediated by pertussis toxin sensitive G proteins that inhibits adenylate cyclase activity. The sequence is that of Melatonin receptor type 1A from Gallus gallus (Chicken).